The sequence spans 277 residues: Digeranylgeranylglyceryl phosphate synthase (277 aa).

The next 7 membrane-spanning stretches (helical) occupy residues 16 to 36, 84 to 104, 107 to 127, 146 to 166, 200 to 220, 221 to 241, and 257 to 277; these read ILAGIVGILGALVAYEGIPDI, ALYYALLQYAIGSILAYFLNI, FVFATIAYFLTFLYGWKLKPL, GAIGVGRIGLAGYLAICAFLV, AIIAAIFGFLTVIASFLPVKV, GIGLGYAPIIIVDIIIIKASI, and LKIATFVAVISFLAGALTKGV.

The protein belongs to the UbiA prenyltransferase family. DGGGP synthase subfamily. Mg(2+) is required as a cofactor.

The protein localises to the cell membrane. It carries out the reaction sn-3-O-(geranylgeranyl)glycerol 1-phosphate + (2E,6E,10E)-geranylgeranyl diphosphate = 2,3-bis-O-(geranylgeranyl)-sn-glycerol 1-phosphate + diphosphate. It participates in membrane lipid metabolism; glycerophospholipid metabolism. In terms of biological role, prenyltransferase that catalyzes the transfer of the geranylgeranyl moiety of geranylgeranyl diphosphate (GGPP) to the C2 hydroxyl of (S)-3-O-geranylgeranylglyceryl phosphate (GGGP). This reaction is the second ether-bond-formation step in the biosynthesis of archaeal membrane lipids. This chain is Digeranylgeranylglyceryl phosphate synthase, found in Pyrococcus furiosus (strain ATCC 43587 / DSM 3638 / JCM 8422 / Vc1).